Here is a 371-residue protein sequence, read N- to C-terminus: Probable dual-specificity RNA methyltransferase RlmN (371 aa).

The active-site Proton acceptor is Glu113. Residues 119-352 (QSWGNSVCVT…TTVRREMGGE (234 aa)) form the Radical SAM core domain. Cys126 and Cys357 are joined by a disulfide. Residues Cys133, Cys137, and Cys140 each contribute to the [4Fe-4S] cluster site. Residues 182–183 (GE), Ser214, 237–239 (SLH), and Asn313 each bind S-adenosyl-L-methionine. Cys357 functions as the S-methylcysteine intermediate in the catalytic mechanism.

It belongs to the radical SAM superfamily. RlmN family. [4Fe-4S] cluster serves as cofactor.

The protein localises to the cytoplasm. The catalysed reaction is adenosine(2503) in 23S rRNA + 2 reduced [2Fe-2S]-[ferredoxin] + 2 S-adenosyl-L-methionine = 2-methyladenosine(2503) in 23S rRNA + 5'-deoxyadenosine + L-methionine + 2 oxidized [2Fe-2S]-[ferredoxin] + S-adenosyl-L-homocysteine. The enzyme catalyses adenosine(37) in tRNA + 2 reduced [2Fe-2S]-[ferredoxin] + 2 S-adenosyl-L-methionine = 2-methyladenosine(37) in tRNA + 5'-deoxyadenosine + L-methionine + 2 oxidized [2Fe-2S]-[ferredoxin] + S-adenosyl-L-homocysteine. Specifically methylates position 2 of adenine 2503 in 23S rRNA and position 2 of adenine 37 in tRNAs. The protein is Probable dual-specificity RNA methyltransferase RlmN of Symbiobacterium thermophilum (strain DSM 24528 / JCM 14929 / IAM 14863 / T).